The following is a 762-amino-acid chain: Anhydrosialidase (762 aa).

The signal sequence occupies residues 1–27 (MGRIGKKAMAIALVSAVMVTPLNVCAT). Position 293 (Arg-293) interacts with substrate. Catalysis depends on Asp-318, which acts as the Proton acceptor. BNR repeat units lie at residues 328 to 339 (AKSTDGGNTWSE), 511 to 522 (RYSDDEGASWSD), and 571 to 582 (MYSDDHGDNWTY). Glu-595 is an active-site residue. Arg-611 lines the substrate pocket. Residues 620–631 (VTSIDGGETWSD) form a BNR 4 repeat. Arg-673 lines the substrate pocket. Catalysis depends on Tyr-713, which acts as the Nucleophile.

The protein belongs to the glycosyl hydrolase 33 family.

The protein localises to the secreted. It is found in the extracellular space. It catalyses the reaction Elimination of alpha-sialyl groups in N-acetylneuraminic acid glycosides, releasing 2,7-anhydro-alpha-N-acetylneuraminate.. The sequence is that of Anhydrosialidase from Macrobdella decora (North American leech).